The following is a 418-amino-acid chain: eIF5-mimic protein 2 (418 aa).

The segment covering 1 to 14 (MNQKQQKPTLSGQR) has biased composition (polar residues). Positions 1–25 (MNQKQQKPTLSGQRFKTRKRDEKER) are disordered. Residues 246–413 (NQQTIGARKE…KNAEEESESE (168 aa)) form the W2 domain.

Belongs to the BZW family.

Functionally, translation initiation regulator which may repress repeat-associated non-AUG (RAN) initiated translation probably by acting as a competitive inhibitor of eukaryotic translation initiation factor 5 (EIF5) function. Enhances histone H4 gene transcription but does not seem to bind DNA directly. The sequence is that of eIF5-mimic protein 2 (BZW1) from Gallus gallus (Chicken).